A 77-amino-acid polypeptide reads, in one-letter code: Major pilus subunit operon regulatory protein (77 aa).

To E.coli AfaF and DaaF.

Its function is as follows. Plays a role in the inhibition of methylation at the GATC1028 site located in the regulatory region upstream of the pabA promoter. May, in conjunction with the Mbf (methylation blocking factor), inhibits deoxyadenosine methylase from methylating the GATC1028 site. The protein is Major pilus subunit operon regulatory protein (papI) of Escherichia coli.